The chain runs to 112 residues: uncharacterized protein (112 aa).

Positions Met-1–Ala-25 are cleaved as a signal peptide.

This is an uncharacterized protein from Mycobacterium tuberculosis (strain CDC 1551 / Oshkosh).